The chain runs to 505 residues: Activin receptor type-1B (505 aa).

A signal peptide spans 1–23 (MAESAGASSFFPLVVLLLAGSGG). Residues 24–126 (SGPRGIQALL…EHPSMWGPVE (103 aa)) are Extracellular-facing. Asn-43 carries N-linked (GlcNAc...) asparagine glycosylation. Residues 127-149 (LVGIIAGPVFLLFLIIIIVFLVI) form a helical membrane-spanning segment. The Cytoplasmic segment spans residues 150–505 (NYHQRVYHNR…QLSVQEDVKI (356 aa)). Positions 177–206 (KTLQDLVYDLSTSGSGSGLPLFVQRTVART) constitute a GS domain. Residues 207 to 497 (IVLQEIIGKG…LRIKKTLSQL (291 aa)) enclose the Protein kinase domain. Residues 213–221 (IGKGRFGEV) and Lys-234 each bind ATP. Residue Asp-335 is the Proton acceptor of the active site. Residue Tyr-380 is modified to Phosphotyrosine.

Belongs to the protein kinase superfamily. TKL Ser/Thr protein kinase family. TGFB receptor subfamily. Forms an activin receptor complex with activin receptor type-2 (ACVR2A or ACVR2B). Part of a complex consisting of MAGI2/ARIP1, ACVR2A, ACVR1B and SMAD3. Interacts with SMAD2 and SMAD3. Interacts with SMAD7. Interacts with FKBP1A. Interacts with IGSF1. Interacts with CRIPTO. Interacts with TDP2. Interacts with TSC22D1/TSC-22. The cofactor is Mg(2+). It depends on Mn(2+) as a cofactor. Autophosphorylated. Phosphorylated by activin receptor type-2 (ACVR2A or ACVR2B) in response to activin-binding at serine and threonine residues in the GS domain. Phosphorylation of ACVR1B by activin receptor type-2 regulates association with SMAD7. Post-translationally, ubiquitinated. Level of ubiquitination is regulated by the SMAD7-SMURF1 complex. In terms of processing, ubiquitinated. Urogenital ridge, testis, ovary, brain and lungs.

Its subcellular location is the cell membrane. It carries out the reaction L-threonyl-[receptor-protein] + ATP = O-phospho-L-threonyl-[receptor-protein] + ADP + H(+). The enzyme catalyses L-seryl-[receptor-protein] + ATP = O-phospho-L-seryl-[receptor-protein] + ADP + H(+). Its activity is regulated as follows. Activin receptor type-2 (ACVR2A or ACVR2B) activates the type-1 receptor through phosphorylation of its regulatory GS domain. Functionally, transmembrane serine/threonine kinase activin type-1 receptor forming an activin receptor complex with activin receptor type-2 (ACVR2A or ACVR2B). Transduces the activin signal from the cell surface to the cytoplasm and is thus regulating a many physiological and pathological processes including neuronal differentiation and neuronal survival, hair follicle development and cycling, FSH production by the pituitary gland, wound healing, extracellular matrix production, immunosuppression and carcinogenesis. Activin is also thought to have a paracrine or autocrine role in follicular development in the ovary. Within the receptor complex, type-2 receptors (ACVR2A and/or ACVR2B) act as a primary activin receptors whereas the type-1 receptors like ACVR1B act as downstream transducers of activin signals. Activin binds to type-2 receptor at the plasma membrane and activates its serine-threonine kinase. The activated receptor type-2 then phosphorylates and activates the type-1 receptor such as ACVR1B. Once activated, the type-1 receptor binds and phosphorylates the SMAD proteins SMAD2 and SMAD3, on serine residues of the C-terminal tail. Soon after their association with the activin receptor and subsequent phosphorylation, SMAD2 and SMAD3 are released into the cytoplasm where they interact with the common partner SMAD4. This SMAD complex translocates into the nucleus where it mediates activin-induced transcription. Inhibitory SMAD7, which is recruited to ACVR1B through FKBP1A, can prevent the association of SMAD2 and SMAD3 with the activin receptor complex, thereby blocking the activin signal. Activin signal transduction is also antagonized by the binding to the receptor of inhibin-B via the IGSF1 inhibin coreceptor. ACVR1B also phosphorylates TDP2. The protein is Activin receptor type-1B (Acvr1b) of Rattus norvegicus (Rat).